The sequence spans 99 residues: Plastocyanin (99 aa).

A Plastocyanin-like domain is found at 1–99 (VEVLLGASDG…AGMVGQVTVN (99 aa)). Residues His-37, Cys-84, His-87, and Met-92 each contribute to the Cu cation site.

It belongs to the plastocyanin family. Requires Cu(2+) as cofactor.

It localises to the plastid. The protein resides in the chloroplast thylakoid membrane. Its function is as follows. Participates in electron transfer between P700 and the cytochrome b6-f complex in photosystem I. This is Plastocyanin (PETE) from Vicia faba (Broad bean).